Reading from the N-terminus, the 615-residue chain is Probable transporter mch1 (615 aa).

Residues 1–35 form a disordered region; the sequence is MTGSIGQAPAIDKRDFDINRRSSTPHETAAQEDEA. Over residues 11 to 20 the composition is skewed to basic and acidic residues; the sequence is IDKRDFDINR. A helical membrane pass occupies residues 84-104; that stretch reads FVWGVITCLGAGSITAFSLYG. An N-linked (GlcNAc...) asparagine glycan is attached at Asn112. Transmembrane regions (helical) follow at residues 120 to 140, 147 to 167, 182 to 202, 218 to 238, and 261 to 281; these read EVSI…GYLC, PLTL…AFVY, FWVM…MYLA, GIIL…QSQV, and FLFL…ALRI. The N-linked (GlcNAc...) asparagine glycan is linked to Asn329. Helical transmembrane passes span 371-391, 428-448, 477-497, 512-532, 538-558, and 583-603; these read IFLA…VTGP, IIAL…DLFA, LAFL…LASP, LVGL…SVVW, GTNW…WGVI, and FGFW…AWLV.

The protein belongs to the major facilitator superfamily.

The protein localises to the vacuole membrane. Probable transporter. In Emericella nidulans (strain FGSC A4 / ATCC 38163 / CBS 112.46 / NRRL 194 / M139) (Aspergillus nidulans), this protein is Probable transporter mch1 (mch1).